The primary structure comprises 100 residues: Small ribosomal subunit protein uS14c (100 aa).

The protein belongs to the universal ribosomal protein uS14 family. As to quaternary structure, part of the 30S ribosomal subunit.

The protein resides in the plastid. Its subcellular location is the chloroplast. Its function is as follows. Binds 16S rRNA, required for the assembly of 30S particles. In Glycine max (Soybean), this protein is Small ribosomal subunit protein uS14c.